The chain runs to 475 residues: Ribulose bisphosphate carboxylase large chain (475 aa).

The propeptide occupies 1-2 (MS). The residue at position 3 (P3) is an N-acetylproline. K14 is modified (N6,N6,N6-trimethyllysine). Residues N123 and T173 each contribute to the substrate site. Residue K175 is the Proton acceptor of the active site. Substrate is bound at residue K177. 3 residues coordinate Mg(2+): K201, D203, and E204. Position 201 is an N6-carboxylysine (K201). The active-site Proton acceptor is H294. The substrate site is built by R295, H327, and S379.

This sequence belongs to the RuBisCO large chain family. Type I subfamily. Heterohexadecamer of 8 large chains and 8 small chains; disulfide-linked. The disulfide link is formed within the large subunit homodimers. Mg(2+) is required as a cofactor. The disulfide bond which can form in the large chain dimeric partners within the hexadecamer appears to be associated with oxidative stress and protein turnover.

The protein localises to the plastid. It localises to the chloroplast. The catalysed reaction is 2 (2R)-3-phosphoglycerate + 2 H(+) = D-ribulose 1,5-bisphosphate + CO2 + H2O. The enzyme catalyses D-ribulose 1,5-bisphosphate + O2 = 2-phosphoglycolate + (2R)-3-phosphoglycerate + 2 H(+). Functionally, ruBisCO catalyzes two reactions: the carboxylation of D-ribulose 1,5-bisphosphate, the primary event in carbon dioxide fixation, as well as the oxidative fragmentation of the pentose substrate in the photorespiration process. Both reactions occur simultaneously and in competition at the same active site. This is Ribulose bisphosphate carboxylase large chain from Buxus microphylla (Littleleaf boxwood).